A 1297-amino-acid chain; its full sequence is Phosphoribosylformylglycinamidine synthase (1297 aa).

ATP is bound by residues 307 to 318 (GASTGSGGEIRD) and Ala678. Glu718, Asn722, and Asp886 together coordinate Mg(2+). A Glutamine amidotransferase type-1 domain is found at 1044-1297 (MAILREQGVN…MFQNARKYFG (254 aa)). The active-site Nucleophile is the Cys1137. Residues His1262 and Glu1264 contribute to the active site.

In the N-terminal section; belongs to the FGAMS family. As to quaternary structure, monomer.

Its subcellular location is the cytoplasm. It carries out the reaction N(2)-formyl-N(1)-(5-phospho-beta-D-ribosyl)glycinamide + L-glutamine + ATP + H2O = 2-formamido-N(1)-(5-O-phospho-beta-D-ribosyl)acetamidine + L-glutamate + ADP + phosphate + H(+). It participates in purine metabolism; IMP biosynthesis via de novo pathway; 5-amino-1-(5-phospho-D-ribosyl)imidazole from N(2)-formyl-N(1)-(5-phospho-D-ribosyl)glycinamide: step 1/2. Its function is as follows. Phosphoribosylformylglycinamidine synthase involved in the purines biosynthetic pathway. Catalyzes the ATP-dependent conversion of formylglycinamide ribonucleotide (FGAR) and glutamine to yield formylglycinamidine ribonucleotide (FGAM) and glutamate. The protein is Phosphoribosylformylglycinamidine synthase of Vibrio cholerae serotype O1 (strain ATCC 39315 / El Tor Inaba N16961).